The primary structure comprises 222 residues: Deoxyribose-phosphate aldolase (222 aa).

Asp93 (proton donor/acceptor) is an active-site residue. Catalysis depends on Lys156, which acts as the Schiff-base intermediate with acetaldehyde. The active-site Proton donor/acceptor is the Lys186.

The protein belongs to the DeoC/FbaB aldolase family. DeoC type 1 subfamily.

The protein localises to the cytoplasm. It carries out the reaction 2-deoxy-D-ribose 5-phosphate = D-glyceraldehyde 3-phosphate + acetaldehyde. It participates in carbohydrate degradation; 2-deoxy-D-ribose 1-phosphate degradation; D-glyceraldehyde 3-phosphate and acetaldehyde from 2-deoxy-alpha-D-ribose 1-phosphate: step 2/2. Catalyzes a reversible aldol reaction between acetaldehyde and D-glyceraldehyde 3-phosphate to generate 2-deoxy-D-ribose 5-phosphate. The protein is Deoxyribose-phosphate aldolase of Corynebacterium glutamicum (strain ATCC 13032 / DSM 20300 / JCM 1318 / BCRC 11384 / CCUG 27702 / LMG 3730 / NBRC 12168 / NCIMB 10025 / NRRL B-2784 / 534).